The primary structure comprises 522 residues: Sorting nexin-1 (522 aa).

Residues 1 to 144 are disordered; that stretch reads MASGGGGCSA…EEEEQEDQFD (144 aa). Residues Ser-32 and Ser-39 each carry the phosphoserine modification. Positions 35–45 are enriched in acidic residues; it reads EAGDSDTEGED. 2 positions are modified to phosphothreonine: Thr-41 and Thr-48. Polar residues predominate over residues 55–65; it reads KPQSPKKTTSL. Ser-58 and Ser-72 each carry phosphoserine. The segment covering 71 to 80 has biased composition (basic and acidic residues); the sequence is GSKENGIHED. Residues 98–125 show a composition bias toward polar residues; that stretch reads LDSTQNNQKTMPGKTLTSHSPQEATNSP. Over residues 132–143 the composition is skewed to acidic residues; the sequence is EELEEEEQEDQF. One can recognise a PX domain in the interval 143–272; that stretch reads FDLTVGITDP…EFLEKEELPR (130 aa). Residues Arg-186, Ser-188, and Lys-214 each contribute to the a 1,2-diacyl-sn-glycero-3-phospho-(1D-myo-inositol-3-phosphate) site. Ser-188 bears the Phosphoserine mark. At Lys-237 the chain carries N6-acetyllysine. Arg-238 is a binding site for a 1,2-diacyl-sn-glycero-3-phospho-(1D-myo-inositol-3-phosphate). A Phosphoserine modification is found at Ser-280. Positions 281–298 are membrane-binding amphipathic helix; it reads GAGLLKMFNKATDAVSKM. The 221-residue stretch at 302-522 folds into the BAR domain; sequence MNESDIWFEE…AFLPEAKAIS (221 aa).

The protein belongs to the sorting nexin family. In terms of assembly, predominantly forms heterodimers with BAR domain-containing sorting nexins SNX5, SNX6 and SNX32. Can self-associate to form homodimers. The heterodimers are proposed to self-assemble into helical arrays on the membrane to stabilize and expand local membrane curvature underlying endosomal tubule formation. Thought to be a component of the originally described retromer complex (also called SNX-BAR retromer) which is a pentamer containing the heterotrimeric retromer cargo-selective complex (CSC), also described as vacuolar protein sorting subcomplex (VPS) and a heterodimeric membrane-deforming subcomplex formed between SNX1 or SNX2 and SNX5 or SNX6 (also called SNX-BAR subcomplex); the respective CSC and SNX-BAR subcomplexes associate with low affinity. Interacts with SNX5, SNX6, SNX32, VPS26A, VPS29, VPS35, DRD5, DENND5A, KALRN, RHOG (GDP-bound form). The interaction with SNX2 is reported controversially. Interacts with DNAJC13; prevented by presence of HGS. Interacts with HGS.

The protein localises to the endosome membrane. It is found in the golgi apparatus. It localises to the trans-Golgi network membrane. The protein resides in the early endosome membrane. Its subcellular location is the cell projection. The protein localises to the lamellipodium. Functionally, involved in several stages of intracellular trafficking. Interacts with membranes containing phosphatidylinositol 3-phosphate (PtdIns(3P)) or phosphatidylinositol 3,5-bisphosphate (PtdIns(3,5)P2). Acts in part as component of the retromer membrane-deforming SNX-BAR subcomplex. The SNX-BAR retromer mediates retrograde transport of cargo proteins from endosomes to the trans-Golgi network (TGN) and is involved in endosome-to-plasma membrane transport for cargo protein recycling. The SNX-BAR subcomplex functions to deform the donor membrane into a tubular profile called endosome-to-TGN transport carrier (ETC). Can sense membrane curvature and has in vitro vesicle-to-membrane remodeling activity. Involved in retrograde endosome-to-TGN transport of lysosomal enzyme receptors (IGF2R, M6PR and SORT1). Plays a role in targeting ligand-activated EGFR to the lysosomes for degradation after endocytosis from the cell surface and release from the Golgi. Involvement in retromer-independent endocytic trafficking of P2RY1 and lysosomal degradation of protease-activated receptor-1/F2R. Promotes KALRN- and RHOG-dependent but retromer-independent membrane remodeling such as lamellipodium formation; the function is dependent on GEF activity of KALRN. Required for endocytosis of DRD5 upon agonist stimulation but not for basal receptor trafficking. This Mus musculus (Mouse) protein is Sorting nexin-1 (Snx1).